The chain runs to 126 residues: Fluoride-specific ion channel FluC (126 aa).

4 consecutive transmembrane segments (helical) span residues I4 to W24, Y35 to I55, M68 to F88, and I100 to L120. Na(+)-binding residues include G75 and T78.

It belongs to the fluoride channel Fluc/FEX (TC 1.A.43) family.

The protein resides in the cell membrane. It carries out the reaction fluoride(in) = fluoride(out). Its activity is regulated as follows. Na(+) is not transported, but it plays an essential structural role and its presence is essential for fluoride channel function. Functionally, fluoride-specific ion channel. Important for reducing fluoride concentration in the cell, thus reducing its toxicity. The chain is Fluoride-specific ion channel FluC from Chloroflexus aurantiacus (strain ATCC 29366 / DSM 635 / J-10-fl).